The chain runs to 471 residues: 3-isopropylmalate dehydratase large subunit (471 aa).

Residues C347, C407, and C410 each contribute to the [4Fe-4S] cluster site.

The protein belongs to the aconitase/IPM isomerase family. LeuC type 1 subfamily. Heterodimer of LeuC and LeuD. The cofactor is [4Fe-4S] cluster.

The enzyme catalyses (2R,3S)-3-isopropylmalate = (2S)-2-isopropylmalate. It participates in amino-acid biosynthesis; L-leucine biosynthesis; L-leucine from 3-methyl-2-oxobutanoate: step 2/4. Catalyzes the isomerization between 2-isopropylmalate and 3-isopropylmalate, via the formation of 2-isopropylmaleate. The polypeptide is 3-isopropylmalate dehydratase large subunit (Buchnera aphidicola subsp. Acyrthosiphon pisum (strain APS) (Acyrthosiphon pisum symbiotic bacterium)).